We begin with the raw amino-acid sequence, 429 residues long: MDVTSTLSLGDPLEPARKATADMLRSRDHSFSLPQPFYCDQRLFEIDMQEIFHKEWLIAGMTCEIPAKGNFLTLQIGKNPVLVIRGAEGQVHAFHNVCRHRGSRLCVSEKGKVAKLVCPYHQWTYELDGRLLFAGTEMGADFDMKEYGLKPIQVKTAGGYIFISLAENPPAIDDFLATLEHYMEPYDMENAKVAVQTTIREAANWKLVIENNRECYHCNGSHPELLKTLLEWDDVTDPRASQAFKDQVAACTSAWDAEKIPYAHASFGLRNRIVRMPLLDGTVSMTMDGKQGSKKLMGRIKNPDLGSMRILHLPHSWNHCMGDHLIVFTVWPISAQETLVTTKWLVHKDAVEGVDYDVARLREVWDATNDQDRRLAEENQRGINSDAYQPGPYSKTYEFGVINFLDWYSERMLNNLGEESAHVRKVAGS.

A Rieske domain is found at 56 to 163 (WLIAGMTCEI…VKTAGGYIFI (108 aa)). [2Fe-2S] cluster-binding residues include cysteine 98, histidine 100, cysteine 118, and histidine 121. Positions 217 and 222 each coordinate Fe cation.

The protein belongs to the bacterial ring-hydroxylating dioxygenase alpha subunit family. The system is composed of an oxygenase subunit (GbcA) and a reductase subunit (GbcB). Requires [2Fe-2S] cluster as cofactor. It depends on Fe cation as a cofactor.

The enzyme catalyses glycine betaine + NADH + O2 + H(+) = N,N-dimethylglycine + formaldehyde + NAD(+) + H2O. Its function is as follows. Involved in degradation of glycine betaine. Part of a Rieske-type oxygenase system that catalyzes the conversion of glycine betaine (GB) to dimethylglycine (DMG). This subunit is the terminal oxygenase component of the system. Required for growth on choline and GB, but not for growth on DMG. The polypeptide is Glycine betaine monooxygenase oxygenase subunit (Pseudomonas aeruginosa (strain ATCC 15692 / DSM 22644 / CIP 104116 / JCM 14847 / LMG 12228 / 1C / PRS 101 / PAO1)).